A 467-amino-acid chain; its full sequence is ATP-dependent protease ATPase subunit HslU (467 aa).

ATP contacts are provided by residues Val22 and 64 to 69 (GVGKTE). The tract at residues 146–185 (KASNNSNPLESLLGGAIPNFGNNDDEEEETPTEEIKTKRS) is disordered. A compositionally biased stretch (acidic residues) spans 168-177 (NDDEEEETPT). Residues Asp280, Glu345, and Arg417 each contribute to the ATP site.

It belongs to the ClpX chaperone family. HslU subfamily. A double ring-shaped homohexamer of HslV is capped on each side by a ring-shaped HslU homohexamer. The assembly of the HslU/HslV complex is dependent on binding of ATP.

The protein resides in the cytoplasm. Functionally, ATPase subunit of a proteasome-like degradation complex; this subunit has chaperone activity. The binding of ATP and its subsequent hydrolysis by HslU are essential for unfolding of protein substrates subsequently hydrolyzed by HslV. HslU recognizes the N-terminal part of its protein substrates and unfolds these before they are guided to HslV for hydrolysis. The polypeptide is ATP-dependent protease ATPase subunit HslU (Staphylococcus haemolyticus (strain JCSC1435)).